The following is a 243-amino-acid chain: Probable ubiquitin-conjugating enzyme E2 33 (243 aa).

Residues 5-162 (ACIKRLQKEY…FPEYVEKYSQ (158 aa)) form the UBC core domain. C87 acts as the Glycyl thioester intermediate in catalysis. The disordered stretch occupies residues 168–197 (EEAATQQTTTSENQDFPQKDNAKVESEKSV). Over residues 184–197 (PQKDNAKVESEKSV) the composition is skewed to basic and acidic residues. The helical transmembrane segment at 220–240 (LPGWIVLLLVSIVGVVMALPL) threads the bilayer.

Belongs to the ubiquitin-conjugating enzyme family.

The protein localises to the membrane. It carries out the reaction S-ubiquitinyl-[E1 ubiquitin-activating enzyme]-L-cysteine + [E2 ubiquitin-conjugating enzyme]-L-cysteine = [E1 ubiquitin-activating enzyme]-L-cysteine + S-ubiquitinyl-[E2 ubiquitin-conjugating enzyme]-L-cysteine.. It participates in protein modification; protein ubiquitination. Its function is as follows. Accepts the ubiquitin from the E1 complex and catalyzes its covalent attachment to other proteins. The polypeptide is Probable ubiquitin-conjugating enzyme E2 33 (UBC33) (Arabidopsis thaliana (Mouse-ear cress)).